The sequence spans 35 residues: Sperm-specific protein Phi-1 (35 aa).

Basic residues-rich tracts occupy residues 1 to 17 and 25 to 35; these read PSPT…RSRS and AAKRAKSKTAK. Positions 1-35 are disordered; sequence PSPTRRSKSRSKSRSRSRSASAGKAAKRAKSKTAK.

Sperm.

The protein localises to the nucleus. Its subcellular location is the chromosome. Involved in nuclear basic protein transition: histones are replaced by spermatid specific proteins which are themselves replaced by protamines in late spermatids. The sequence is that of Sperm-specific protein Phi-1 from Mytilus californianus (California mussel).